Reading from the N-terminus, the 440-residue chain is Adenylosuccinate synthetase (440 aa).

Residues glycine 13–lysine 19 and glycine 41–threonine 43 each bind GTP. Aspartate 14 functions as the Proton acceptor in the catalytic mechanism. Residues aspartate 14 and glycine 41 each contribute to the Mg(2+) site. IMP contacts are provided by residues aspartate 14–lysine 17, asparagine 39–histidine 42, threonine 135, arginine 149, glutamine 230, threonine 245, and arginine 313. Histidine 42 acts as the Proton donor in catalysis. Substrate is bound at residue threonine 309–arginine 315. Residues arginine 315, lysine 341 to aspartate 343, and serine 423 to glycine 425 contribute to the GTP site.

This sequence belongs to the adenylosuccinate synthetase family. Homodimer. Mg(2+) serves as cofactor.

Its subcellular location is the cytoplasm. It carries out the reaction IMP + L-aspartate + GTP = N(6)-(1,2-dicarboxyethyl)-AMP + GDP + phosphate + 2 H(+). The protein operates within purine metabolism; AMP biosynthesis via de novo pathway; AMP from IMP: step 1/2. Functionally, plays an important role in the de novo pathway of purine nucleotide biosynthesis. Catalyzes the first committed step in the biosynthesis of AMP from IMP. The polypeptide is Adenylosuccinate synthetase (Methylobacillus flagellatus (strain ATCC 51484 / DSM 6875 / VKM B-1610 / KT)).